The sequence spans 549 residues: Cation/acetate symporter ActP (549 aa).

A run of 13 helical transmembrane segments spans residues 33 to 53, 76 to 96, 103 to 123, 149 to 169, 183 to 203, 206 to 226, 262 to 282, 303 to 323, 355 to 375, 404 to 424, 428 to 448, 463 to 483, and 493 to 513; these read WQAIIMFLIFVLLTLYITYWA, GLAIAGDFMSAASFLGISALV, GLIYSLGFLVGWPIILFLIAE, LSACGSLVVVALYLIAQMVGA, IAVVLVGVLMVMYVLFGGMLA, WVQIIKAVLLLFGASFMAFMV, ISALSLGLGLMFGTAGLPHIL, GFMGYFYILTFIIGFGAIMLV, LFLGFISAVAFATILAVVAGL, VSKITVLILGVVAILLGILFE, IAFMVGLAFSIAASCNFPIIL, IGGWLGLLTAVILMVLGPTIW, and IFPYEYPALFSIAVAFIGIWF.

Belongs to the sodium:solute symporter (SSF) (TC 2.A.21) family.

It is found in the cell inner membrane. Functionally, transports acetate. This chain is Cation/acetate symporter ActP, found in Enterobacter sp. (strain 638).